The following is a 268-amino-acid chain: Undecaprenyl-diphosphatase (268 aa).

7 helical membrane passes run 47–67 (FTVLIQPGAILAIVVIYFAKL), 83–103 (FVIGVLAAFLPAVIVGLIAGK), 109–129 (LFNPWVVCFSLIVGGAVLMWV), 144–164 (FPLPMYVWIGIAQCVAMIPGV), 184–204 (AAEFSFFLAIPTMTGAFAYDF), 218–238 (TVAIGFVVSFVTAIIVVKAFL), and 246–266 (FTFFAWWRVIVGTLGLIALAL).

Belongs to the UppP family.

Its subcellular location is the cell inner membrane. The catalysed reaction is di-trans,octa-cis-undecaprenyl diphosphate + H2O = di-trans,octa-cis-undecaprenyl phosphate + phosphate + H(+). In terms of biological role, catalyzes the dephosphorylation of undecaprenyl diphosphate (UPP). Confers resistance to bacitracin. This is Undecaprenyl-diphosphatase from Nitrobacter winogradskyi (strain ATCC 25391 / DSM 10237 / CIP 104748 / NCIMB 11846 / Nb-255).